Consider the following 217-residue polypeptide: tRNA (guanine-N(7)-)-methyltransferase (217 aa).

S-adenosyl-L-methionine contacts are provided by Glu-44, Glu-69, Asp-96, and Asp-118. Asp-118 is a catalytic residue. Lys-122 provides a ligand contact to substrate. Positions 124–129 (RHEKRR) are interaction with RNA. Substrate-binding positions include Asp-154 and 191-194 (TEYE).

The protein belongs to the class I-like SAM-binding methyltransferase superfamily. TrmB family.

It catalyses the reaction guanosine(46) in tRNA + S-adenosyl-L-methionine = N(7)-methylguanosine(46) in tRNA + S-adenosyl-L-homocysteine. Its pathway is tRNA modification; N(7)-methylguanine-tRNA biosynthesis. Catalyzes the formation of N(7)-methylguanine at position 46 (m7G46) in tRNA. The sequence is that of tRNA (guanine-N(7)-)-methyltransferase from Bacillus velezensis (strain DSM 23117 / BGSC 10A6 / LMG 26770 / FZB42) (Bacillus amyloliquefaciens subsp. plantarum).